Here is a 67-residue protein sequence, read N- to C-terminus: Protein Tpau_2998 (67 aa).

The polypeptide is Protein Tpau_2998 (Tsukamurella paurometabola (strain ATCC 8368 / DSM 20162 / CCUG 35730 / CIP 100753 / JCM 10117 / KCTC 9821 / NBRC 16120 / NCIMB 702349 / NCTC 13040) (Corynebacterium paurometabolum)).